Here is a 741-residue protein sequence, read N- to C-terminus: Prestin (741 aa).

The Cytoplasmic portion of the chain corresponds to 1–79; it reads MDHVEETEIL…WLPAYRFKEY (79 aa). A helical transmembrane segment spans residues 80–105; sequence VLGDIVSGISTGVLQLPQGLAFAMLA. The Extracellular segment spans residues 106 to 109; the sequence is AVPP. Residues 110–125 traverse the membrane as a helical segment; that stretch reads VFGLYSSFYPVIMYCF. At 126-137 the chain is on the cytoplasmic side; sequence FGTSRHISIGPF. Residues 138–147 form a helical membrane-spanning segment; it reads AVISLMIGGV. The Extracellular portion of the chain corresponds to 148 to 178; the sequence is AVRLVPDDIVIPGGVNATNSTEARDALRVKV. Positions 158–168 match the Involved in motor function motif; sequence IPGGVNATNST. N-linked (GlcNAc...) asparagine glycosylation is found at asparagine 163 and asparagine 166. 2 helical membrane passes run 179-208 and 209-230; these read AMSV…LTEP and LVRG…KYLF. Over 231-243 the chain is Extracellular; sequence GVKTKRYSGIFSV. The segment at residues 244-248 is an intramembrane region (helical); that stretch reads VYSTV. The Extracellular portion of the chain corresponds to 249-261; sequence AVLQNVKNLNVCS. Residues 262–283 traverse the membrane as a helical segment; sequence LGVGLMVFGLLLGGKEFNERFK. The Cytoplasmic portion of the chain corresponds to 284–291; the sequence is EKLPAPIP. Residues 292–303 traverse the membrane as a helical segment; sequence LEFFAVVMGTGI. Residues 304-338 are Extracellular-facing; that stretch reads SAGFSLHESYNVDVVGTLPLGLLPPANPDTSLFHL. A helical transmembrane segment spans residues 339 to 361; that stretch reads VYVDAIAIAIVGFSVTISMAKTL. The Cytoplasmic segment spans residues 362–370; it reads ANKHGYQVD. A helical membrane pass occupies residues 371 to 388; it reads GNQELIALGLCNSTGSLF. Residues 389–396 lie on the Extracellular side of the membrane; the sequence is QTFAISCS. Residues 397–406 form a helical membrane-spanning segment; sequence LSRSLVQEGT. Residue serine 398 participates in salicylate binding. Topologically, residues 407–410 are cytoplasmic; sequence GGKT. A helical transmembrane segment spans residues 411–429; that stretch reads QLAGCLASLMILLVILATG. Residues 430 to 436 are Extracellular-facing; the sequence is FLFESLP. The helical transmembrane segment at 437–459 threads the bilayer; sequence QAVLSAIVIVNLKGMFMQFSDLP. The Cytoplasmic segment spans residues 460–467; it reads FFWRTSKI. A helical transmembrane segment spans residues 468 to 483; the sequence is ELTIWLTTFVSSLFLG. Leucine 484 is a topological domain (extracellular). Residues 485–498 form a helical membrane-spanning segment; the sequence is DYGLITAVIIALMT. Topologically, residues 499–741 are cytoplasmic; it reads VIYRTQSPSY…DSEPNATPEA (243 aa). Positions 505–718 are extended region for STAS domain; it reads SPSYIVLGQL…AVLGSQVREA (214 aa). The STAS domain occupies 525-713; sequence AYEEVKEVPG…HSIHDAVLGS (189 aa). The tract at residues 718-741 is disordered; sequence ALAEQEATAAPPQEDSEPNATPEA. The segment covering 721-730 has biased composition (low complexity); it reads EQEATAAPPQ.

The protein belongs to the SLC26A/SulP transporter (TC 2.A.53) family. Homodimer. Interacts (via STAS domain) with CALM; this interaction is calcium-dependent and the STAS domain interacts with only one lobe of CALM which is an elongated conformation.

It localises to the cell membrane. It carries out the reaction 2 hydrogencarbonate(in) + chloride(out) = 2 hydrogencarbonate(out) + chloride(in). Its function is as follows. Voltage-sensitive motor protein that drives outer hair cell (OHC) electromotility (eM) and participates in sound amplification in the hearing organ. Converts changes in the transmembrane electric potential into mechanical displacements resulting in the coupling of its expansion to movement of a charged voltage sensor across the lipid membrane. The nature of the voltage sensor is not completely clear, and two models compete. In the first model, acts as an incomplete transporter where intracellular chloride anion acts as extrinsic voltage sensor that drives conformational change in the protein which is sufficient to produce a length change in the plane of the membrane and hence in the length of the OHC. The second model in which multiple charged amino acid residues are distributed at the intracellular and extracellular membrane interfaces that form an intrinsic voltage sensor, whose movement produces the non-linear capacitance (NLC). However, the effective voltage sensor may be the result of a hybrid voltage sensor assembled from intrinsic charge (charged residues) and extrinsic charge (bound anion). Notably, binding of anions to the anion-binding pocket partially neutralizes the intrinsic positive charge rather than to form an electrically negative sensor, therefore remaining charge may serve as voltage sensor that, after depolarization, moves from down (expanded state) to up (contracted) conformation, which is accompanied by an eccentric contraction of the intermembrane cross-sectional area of the protein as well as a major increase in the hydrophobic thickness of the protein having as consequences the plasma membrane thickening and the cell contraction after membrane depolarization. The anion-binding pocket transits from the inward-open (Down) state, where it is exposed toward the intracellular solvent in the absence of anion, to the occluded (Up) state upon anion binding. Salicylate competes for the anion-binding site and inhibits the voltage-sensor movement, and therefore inhibits the charge transfer and electromotility by displacing Cl(-) from the anion-binding site and by preventing the structural transitions to the contracted state. In addition, can act as a weak Cl(-)/HCO3 (-) antiporter across the cell membrane and so regulate the intracellular pH of the outer hair cells (OHCs), while firstly found as being unable to mediate electrogenic anion transport. Moreover, supports a role in cardiac mechanical amplification serving as an elastic element to enhance the actomyosin- based sarcomere contraction system. This is Prestin from Tursiops truncatus (Atlantic bottle-nosed dolphin).